A 414-amino-acid chain; its full sequence is Procollagen C-endopeptidase enhancer 2 (414 aa).

A signal peptide spans 1 to 22 (MGGASACIPLCLLLATARMARP). Cystine bridges form between cysteine 32/cysteine 58, cysteine 85/cysteine 106, cysteine 153/cysteine 180, cysteine 207/cysteine 230, cysteine 296/cysteine 363, cysteine 300/cysteine 366, and cysteine 311/cysteine 414. CUB domains lie at 32–143 (CGGI…YSAA) and 153–267 (CGGR…YKFR). The 119-residue stretch at 296-414 (CQQKCRRMGT…PMNALKNKQC (119 aa)) folds into the NTR domain. Residue asparagine 354 is glycosylated (N-linked (GlcNAc...) asparagine).

As to quaternary structure, interacts with heparin with high affinity, and type I or II collagen. O-glycosylated; contains sialic acid.

It localises to the secreted. Its function is as follows. Binds to the C-terminal propeptide of types I and II procollagens and may enhance the cleavage of that propeptide by BMP1. This is Procollagen C-endopeptidase enhancer 2 (Pcolce2) from Mus musculus (Mouse).